Reading from the N-terminus, the 35-residue chain is MEALVYTFLLVSTLGIIFFAIFFREPPKVPDRGSK.

A helical transmembrane segment spans residues 3 to 23 (ALVYTFLLVSTLGIIFFAIFF).

This sequence belongs to the PsbT family. In terms of assembly, PSII is composed of 1 copy each of membrane proteins PsbA, PsbB, PsbC, PsbD, PsbE, PsbF, PsbH, PsbI, PsbJ, PsbK, PsbL, PsbM, PsbT, PsbY, PsbZ, Psb30/Ycf12, at least 3 peripheral proteins of the oxygen-evolving complex and a large number of cofactors. It forms dimeric complexes.

Its subcellular location is the plastid. It is found in the chloroplast thylakoid membrane. Functionally, found at the monomer-monomer interface of the photosystem II (PS II) dimer, plays a role in assembly and dimerization of PSII. PSII is a light-driven water plastoquinone oxidoreductase, using light energy to abstract electrons from H(2)O, generating a proton gradient subsequently used for ATP formation. This is Photosystem II reaction center protein T from Stangeria eriopus (Natal grass cycad).